A 131-amino-acid polypeptide reads, in one-letter code: Glycine cleavage system H protein (131 aa).

In terms of domain architecture, Lipoyl-binding spans 24-106 (RAIVGISDHA…YGEGWIMVIE (83 aa)). Position 65 is an N6-lipoyllysine (lysine 65).

It belongs to the GcvH family. In terms of assembly, the glycine cleavage system is composed of four proteins: P, T, L and H. The cofactor is (R)-lipoate.

Its function is as follows. The glycine cleavage system catalyzes the degradation of glycine. The H protein shuttles the methylamine group of glycine from the P protein to the T protein. The chain is Glycine cleavage system H protein from Xylella fastidiosa (strain M12).